We begin with the raw amino-acid sequence, 135 residues long: Germinal center-associated signaling and motility-like protein (135 aa).

The segment at 1 to 68 is disordered; the sequence is MGNYLLRKLS…ENGSGSEEVC (68 aa). Basic and acidic residues predominate over residues 22 to 48; it reads GNPDEERKRQEMTTFERKLQDQDKKSQ. Positions 26–50 form a coiled coil; that stretch reads EERKRQEMTTFERKLQDQDKKSQEV. Over residues 51–66 the composition is skewed to low complexity; the sequence is SSTSNQENENGSGSEE.

The sequence is that of Germinal center-associated signaling and motility-like protein (GCSAML) from Homo sapiens (Human).